An 855-amino-acid chain; its full sequence is DNA mismatch repair protein MutS (855 aa).

An ATP-binding site is contributed by 616-623 (GPNMGGKS).

This sequence belongs to the DNA mismatch repair MutS family.

Its function is as follows. This protein is involved in the repair of mismatches in DNA. It is possible that it carries out the mismatch recognition step. This protein has a weak ATPase activity. The chain is DNA mismatch repair protein MutS from Salmonella paratyphi A (strain ATCC 9150 / SARB42).